The chain runs to 185 residues: MISSNDLRPGVSVEIDGAPYKVIEFLHVKPGKGAAFVRTKLKNMQTGNVVEKTFRAGETLPAATIEKVEMQYLYAEGNNLVFMDMETYEQAPITAAQIGSAVKYLKENMQVSILRWNGQVIDVELPNTVVLEVVETDPGVKGDTATGGTKPAKLETGAEIQVPLFIKVGERIRVDTRTDTYLGRE.

This sequence belongs to the elongation factor P family.

The protein resides in the cytoplasm. It functions in the pathway protein biosynthesis; polypeptide chain elongation. Functionally, involved in peptide bond synthesis. Stimulates efficient translation and peptide-bond synthesis on native or reconstituted 70S ribosomes in vitro. Probably functions indirectly by altering the affinity of the ribosome for aminoacyl-tRNA, thus increasing their reactivity as acceptors for peptidyl transferase. This Synechococcus sp. (strain JA-2-3B'a(2-13)) (Cyanobacteria bacterium Yellowstone B-Prime) protein is Elongation factor P.